The chain runs to 129 residues: Small ribosomal subunit protein uS11 (129 aa).

This sequence belongs to the universal ribosomal protein uS11 family. As to quaternary structure, part of the 30S ribosomal subunit. Interacts with proteins S7 and S18. Binds to IF-3.

In terms of biological role, located on the platform of the 30S subunit, it bridges several disparate RNA helices of the 16S rRNA. Forms part of the Shine-Dalgarno cleft in the 70S ribosome. This chain is Small ribosomal subunit protein uS11, found in Desulforamulus reducens (strain ATCC BAA-1160 / DSM 100696 / MI-1) (Desulfotomaculum reducens).